A 209-amino-acid chain; its full sequence is Ribosomal RNA large subunit methyltransferase E (209 aa).

S-adenosyl-L-methionine contacts are provided by Gly-63, Trp-65, Asp-83, Asp-99, and Asp-124. Lys-164 functions as the Proton acceptor in the catalytic mechanism. The TRAM domain maps to 191 to 209 (EASRGRSREVYIVAMGYMG).

The protein belongs to the class I-like SAM-binding methyltransferase superfamily. RNA methyltransferase RlmE family.

The protein localises to the cytoplasm. It catalyses the reaction uridine(2552) in 23S rRNA + S-adenosyl-L-methionine = 2'-O-methyluridine(2552) in 23S rRNA + S-adenosyl-L-homocysteine + H(+). In terms of biological role, specifically methylates the uridine in position 2552 of 23S rRNA at the 2'-O position of the ribose in the fully assembled 50S ribosomal subunit. This Histophilus somni (strain 129Pt) (Haemophilus somnus) protein is Ribosomal RNA large subunit methyltransferase E.